Consider the following 701-residue polypeptide: Nucleolar transcription factor 1-B (701 aa).

Residues 1-21 form a disordered region; that stretch reads MNGAAGGDTQGKMTAPKDQDQ. 5 consecutive DNA-binding regions (HMG box) follow at residues 112–180, 196–264, 298–362, 422–489, and 508–574; these read PKKP…AKFR, PEKP…REYM, TKPP…MRFL, PETP…SDMR, and KKAP…DTWM. The disordered stretch occupies residues 382–426; sequence MKRKRTNTPASKMATEDAAKVKSRSGQADKKKAAEERAKLPETPK. Over residues 408–426 the composition is skewed to basic and acidic residues; the sequence is QADKKKAAEERAKLPETPK. Positions 584–701 are disordered; the sequence is AYKEQNTNKR…SADSSDSDSN (118 aa). Residues 597 to 612 show a composition bias toward polar residues; it reads TKIQAPSSKSKLVIQS. Acidic residues predominate over residues 615–682; the sequence is DDDEDDEDDE…DNEEDDDDNE (68 aa). A compositionally biased stretch (low complexity) spans 683 to 695; the sequence is SGSSSSSSSSADS.

As to quaternary structure, XUBF consists of 2 polypeptides of 82 and 85 kDa, encoded by the same or closely related genes.

Its subcellular location is the nucleus. Functionally, UBF recognizes the ribosomal RNA gene promotor and activates transcription mediated by RNA polymerase I through cooperative interactions with the species-specific factor SL1. It binds specifically to the upstream control element. This chain is Nucleolar transcription factor 1-B (ubtf-b), found in Xenopus laevis (African clawed frog).